Consider the following 38-residue polypeptide: Photosystem II reaction center protein Y (38 aa).

The helical transmembrane segment at 4 to 22 (TIVVFAPIIAALAWVVFNI) threads the bilayer.

Belongs to the PsbY family. PSII is composed of 1 copy each of membrane proteins PsbA, PsbB, PsbC, PsbD, PsbE, PsbF, PsbH, PsbI, PsbJ, PsbK, PsbL, PsbM, PsbT, PsbX, PsbY, Psb30/Ycf12, peripheral proteins PsbO, CyanoQ (PsbQ), PsbU, PsbV and a large number of cofactors. It forms dimeric complexes.

The protein resides in the cellular thylakoid membrane. Its function is as follows. Loosely associated component of the core of photosystem II (PSII), it is not always seen in crystals. PSII is a light-driven water plastoquinone oxidoreductase, using light energy to abstract electrons from H(2)O, generating a proton gradient subsequently used for ATP formation. The chain is Photosystem II reaction center protein Y from Prochlorococcus marinus (strain MIT 9215).